The sequence spans 710 residues: Tubulin polyglutamylase TTLL11 (710 aa).

The segment at 41–135 is disordered; the sequence is VRVDAGAAGE…QRPVTVDSSK (95 aa). The span at 51 to 60 shows a compositional bias: basic and acidic residues; sequence PECKAGEEQP. Residues 64–82 show a composition bias toward low complexity; the sequence is APAPAQPSAAEEGNTQVLQ. The segment covering 83–93 has biased composition (pro residues); it reads RPPPTLPPSKP. The span at 123–135 shows a compositional bias: polar residues; sequence NGSQRPVTVDSSK. Residues 128-480 form the TTL domain; the sequence is PVTVDSSKAR…EVKVAVIRDT (353 aa). ATP is bound by residues K249, 255-256, 282-285, and 295-297; these read QG, QEYI, and KFD. Residue Q255 participates in a protein binding. R321 provides a ligand contact to L-glutamate. Position 343 to 344 (343 to 344) interacts with ATP; it reads TN. Y345, S346, and K365 together coordinate L-glutamate. Residues D428, E441, and N443 each coordinate Mg(2+). Residues 467–538 form a c-MTBD region region; the sequence is LVDEEVKVAV…SICLKQVFPK (72 aa). K473 lines the L-glutamate pocket. A disordered region spans residues 665-710; that stretch reads GVPSGGRPPHRGPPQEPSPSAQPAGDNPPPRTSCANKLSHPRHTLS.

This sequence belongs to the tubulin--tyrosine ligase family. Requires Mg(2+) as cofactor.

The protein localises to the cytoplasm. The protein resides in the cytoskeleton. It is found in the cilium basal body. The catalysed reaction is L-glutamyl-[protein] + L-glutamate + ATP = gamma-L-glutamyl-L-glutamyl-[protein] + ADP + phosphate + H(+). It carries out the reaction (L-glutamyl)(n)-gamma-L-glutamyl-L-glutamyl-[protein] + L-glutamate + ATP = (L-glutamyl)(n+1)-gamma-L-glutamyl-L-glutamyl-[protein] + ADP + phosphate + H(+). In terms of biological role, polyglutamylase which modifies tubulin, generating polyglutamate side chains of variable lengths on the gamma-carboxyl group of specific glutamate residues within the C-terminal tail of tubulin. Preferentially mediates ATP-dependent polyglutamate long side-chain elongation over the initiation step of the polyglutamylation reaction. Preferentially modifies the alpha-tubulin tail over a beta-tail. Required for CCSAP localization to both spindle and cilia microtubules. Promotes tubulin polyglutamylation which stimulates spastin/SPAST-mediated microtubule severing, thereby regulating microtubule functions. The polypeptide is Tubulin polyglutamylase TTLL11 (Homo sapiens (Human)).